A 336-amino-acid polypeptide reads, in one-letter code: uncharacterized protein (336 aa).

The N-terminal stretch at 1–21 (MSELVLITGITGFVASHSAEA) is a signal peptide. An NADP(+)-binding site is contributed by K38. Phosphothreonine is present on T153. Y167 contacts NADP(+).

This sequence belongs to the NAD(P)-dependent epimerase/dehydratase family. Dihydroflavonol-4-reductase subfamily.

This is an uncharacterized protein from Schizosaccharomyces pombe (strain 972 / ATCC 24843) (Fission yeast).